A 368-amino-acid chain; its full sequence is Alanine racemase (368 aa).

Residue K40 is the Proton acceptor; specific for D-alanine of the active site. K40 bears the N6-(pyridoxal phosphate)lysine mark. Residue R134 participates in substrate binding. Y263 serves as the catalytic Proton acceptor; specific for L-alanine. Residue M310 participates in substrate binding.

The protein belongs to the alanine racemase family. Requires pyridoxal 5'-phosphate as cofactor.

It carries out the reaction L-alanine = D-alanine. It participates in amino-acid biosynthesis; D-alanine biosynthesis; D-alanine from L-alanine: step 1/1. Catalyzes the interconversion of L-alanine and D-alanine. May also act on other amino acids. This Listeria monocytogenes serotype 4b (strain F2365) protein is Alanine racemase (alr).